Consider the following 183-residue polypeptide: Capsid protein (183 aa).

Residues 136–183 are disordered; it reads NAPILSTLPETTVVRRRGRSPRRRTPSPRRRRSQSPRRRRSKSRESQC. The segment covering 149-177 has biased composition (basic residues); the sequence is VRRRGRSPRRRTPSPRRRRSQSPRRRRSK. Phosphoserine; by host is present on residues Ser-155, Ser-162, and Ser-170. Residues 155 to 160 form a 1; half-length repeat; the sequence is SPRRRT. A 3 X 7 AA repeats of S-P-R-R-R-[PR]-S region spans residues 155-176; sequence SPRRRTPSPRRRRSQSPRRRRS. The Bipartite nuclear localization signal motif lies at 158–175; sequence RRTPSPRRRRSQSPRRRR. Repeat copies occupy residues 162 to 168 and 170 to 176. The tract at residues 177 to 183 is RNA binding; it reads KSRESQC.

This sequence belongs to the orthohepadnavirus core antigen family. Homodimerizes, then multimerizes. Interacts with cytosol exposed regions of viral L glycoprotein present in the reticulum-to-Golgi compartment. Interacts with human FLNB. Phosphorylated form interacts with host importin alpha; this interaction depends on the exposure of the NLS, which itself depends upon genome maturation and/or phosphorylation of the capsid protein. Interacts with host NUP153. Phosphorylated by host SRPK1, SRPK2, and maybe protein kinase C or GAPDH. Phosphorylation is critical for pregenomic RNA packaging. Protein kinase C phosphorylation is stimulated by HBx protein and may play a role in transport of the viral genome to the nucleus at the late step during the viral replication cycle.

It localises to the virion. Its subcellular location is the host cytoplasm. Functionally, self assembles to form an icosahedral capsid. Most capsids appear to be large particles with an icosahedral symmetry of T=4 and consist of 240 copies of capsid protein, though a fraction forms smaller T=3 particles consisting of 180 capsid proteins. Entering capsids are transported along microtubules to the nucleus. Phosphorylation of the capsid is thought to induce exposure of nuclear localization signal in the C-terminal portion of the capsid protein that allows binding to the nuclear pore complex via the importin (karyopherin-) alpha and beta. Capsids are imported in intact form through the nuclear pore into the nuclear basket, where it probably binds NUP153. Only capsids that contain the mature viral genome can release the viral DNA and capsid protein into the nucleoplasm. Immature capsids get stuck in the basket. Capsids encapsulate the pre-genomic RNA and the P protein. Pre-genomic RNA is reverse-transcribed into DNA while the capsid is still in the cytoplasm. The capsid can then either be directed to the nucleus, providing more genomes for transcription, or bud through the endoplasmic reticulum to provide new virions. The chain is Capsid protein from Hepatitis B virus genotype C subtype ar (isolate Japan/S-207/1988) (HBV-C).